The primary structure comprises 230 residues: 5'-methylthioadenosine/S-adenosylhomocysteine nucleosidase (230 aa).

Glutamate 12 (proton acceptor) is an active-site residue. Substrate-binding positions include glycine 78, isoleucine 152, and 173-174; that span reads ME. The Proton donor role is filled by aspartate 197.

The protein belongs to the PNP/UDP phosphorylase family. MtnN subfamily.

It carries out the reaction S-adenosyl-L-homocysteine + H2O = S-(5-deoxy-D-ribos-5-yl)-L-homocysteine + adenine. The enzyme catalyses S-methyl-5'-thioadenosine + H2O = 5-(methylsulfanyl)-D-ribose + adenine. It catalyses the reaction 5'-deoxyadenosine + H2O = 5-deoxy-D-ribose + adenine. The protein operates within amino-acid biosynthesis; L-methionine biosynthesis via salvage pathway; S-methyl-5-thio-alpha-D-ribose 1-phosphate from S-methyl-5'-thioadenosine (hydrolase route): step 1/2. Its function is as follows. Catalyzes the irreversible cleavage of the glycosidic bond in both 5'-methylthioadenosine (MTA) and S-adenosylhomocysteine (SAH/AdoHcy) to adenine and the corresponding thioribose, 5'-methylthioribose and S-ribosylhomocysteine, respectively. Also cleaves 5'-deoxyadenosine, a toxic by-product of radical S-adenosylmethionine (SAM) enzymes, into 5-deoxyribose and adenine. The sequence is that of 5'-methylthioadenosine/S-adenosylhomocysteine nucleosidase from Actinobacillus succinogenes (strain ATCC 55618 / DSM 22257 / CCUG 43843 / 130Z).